The primary structure comprises 786 residues: Probable glutamine--tRNA ligase (786 aa).

Residues 181 to 198 (DLAPKKKEKKPEGPKPSK) show a composition bias toward basic and acidic residues. Positions 181-218 (DLAPKKKEKKPEGPKPSKDAAAAATAPGTKNQKEASPE) are disordered. Positions 276–286 (PEPNGVLHIGH) match the 'HIGH' region motif. Residues 277–279 (EPN) and 283–289 (HIGHAKA) contribute to the ATP site. Asp-309 and Tyr-444 together coordinate L-glutamine. Residues Thr-463, 492–493 (RL), and 500–502 (VSK) each bind ATP. The short motif at 499-503 (VVSKR) is the 'KMSKS' region element.

Belongs to the class-I aminoacyl-tRNA synthetase family.

The enzyme catalyses tRNA(Gln) + L-glutamine + ATP = L-glutaminyl-tRNA(Gln) + AMP + diphosphate. This Caenorhabditis elegans protein is Probable glutamine--tRNA ligase.